We begin with the raw amino-acid sequence, 156 residues long: MTRLTHIDDQGRARMVDVSDKAETVREAIAVGFVRMTPETLALAITGAGRKGDVRAVAEIAGVMAAKKTADLIPLCHPLALSKVEVSVEVAEGGLAVMARVKLKGQTGVEMEALTAVSVACLTIYDMLKAAEKGMVIETVRLVEKTGGKSGAWRAE.

Residues 75 to 77 (LCH) and 111 to 112 (ME) contribute to the substrate site. Aspartate 126 is a catalytic residue.

Belongs to the MoaC family. Homohexamer; trimer of dimers.

It catalyses the reaction (8S)-3',8-cyclo-7,8-dihydroguanosine 5'-triphosphate = cyclic pyranopterin phosphate + diphosphate. Its pathway is cofactor biosynthesis; molybdopterin biosynthesis. In terms of biological role, catalyzes the conversion of (8S)-3',8-cyclo-7,8-dihydroguanosine 5'-triphosphate to cyclic pyranopterin monophosphate (cPMP). The sequence is that of Cyclic pyranopterin monophosphate synthase from Caulobacter sp. (strain K31).